A 555-amino-acid polypeptide reads, in one-letter code: MTRHDATRVIRAATGTTLTAKSWLTEAPLRMLMNNLDPDVAEHPQELVVYGGIGRAARDWESFDAIVAALTRLDEDQTLLVQSGKPVGVFRTHADAPRVLIANSNLVPRWANWDHFSELDQKGLAMYGQMTAGSWIYIGAQGIVQGTYETFVEMGRQHYAGNLAGKWLFTGGLGGMGGAQPLAAVMAGASCLVVECRRSSIDMRLRTGYLDTWTDSLDEALRLIEESCTAKKPLSVGLLGNVADVLDELLLRGIKPDLLTDQTSAHDPVNGYLPQGWSVEEWDAKRVSARKEVEAAARESMANHIRAMLTFHALGVPTVDYGNNLRQMALEAGIDNAFDFPGFVPAYIRPLFCRGIGPFRWVALSGDPDDIAKTDAKVKELIPDDAHLHRWLDMAAEKIAFQGLPARICWVGLGDRHRLGLAFNAMVRSGELKAPVVIGRDHLDSGSVASPNRETEAMADGSDAVSDWPLLNALLNTASGATWVSLHHGGGVGMGFSQHAGMVIVCDGSEAADKRIERVLWNDPATGVMRHADAGYAIATDCAKEKGLDLPGILR.

NAD(+)-binding positions include 51–52 (GG), Gln-129, 175–177 (GMG), Glu-195, 262–266 (QTSAH), 272–273 (YL), and Tyr-321. Cys-409 is a catalytic residue. Residue Gly-491 coordinates NAD(+).

It belongs to the urocanase family. NAD(+) serves as cofactor.

The protein localises to the cytoplasm. The catalysed reaction is 4-imidazolone-5-propanoate = trans-urocanate + H2O. Its pathway is amino-acid degradation; L-histidine degradation into L-glutamate; N-formimidoyl-L-glutamate from L-histidine: step 2/3. Catalyzes the conversion of urocanate to 4-imidazolone-5-propionate. The polypeptide is Urocanate hydratase (Xanthomonas euvesicatoria pv. vesicatoria (strain 85-10) (Xanthomonas campestris pv. vesicatoria)).